A 597-amino-acid polypeptide reads, in one-letter code: MAYNKIPPRWLNCPRRGQPVAGRFLPLKTMLGPRYDSQVAEENRFHPSMLSNYLKSLKVKMSLLVDLTNTSRFYDRNDIEKEGIKYIKLQCKGHGECPTTENTETFIRLCERFNERSPPELIGVHCTHGFNRTGFLICAFLVEKMDWSIEAAVATFAQARPPGIYKGDYLKELFRRYGDIEEAPPPPVLPDWCFEDEDEEDEDEDGKKDSEPGSSASFSKRRKERLKLGAIFLEGITVKGVTQVTTQPKLGEVQQKCHQFCGWEGSGFPGAQPVSMDKQNIRLLEQKPYKVSWKADGTRYMMLIDGTNEVFMIDRDNSVFHVSNLEFPFRKDLRMHLSNTLLDGEMIIDKVNGQAVPRYLIYDIIKFNAQPVGDCDFNIRLQCIEREIISPRHEKMKTGLIDKTQEPFSVRPKQFFDINISRKLLEGNFAKEVSHEMDGLIFQPIGKYKPGRCDDILKWKPPSLNSVDFRLKITRMGGEGLLPQNVGLLYVGGYERPFAQIKVTKELKQYDNKIIECKFENNSWVFMRQRIDKSFPNAYNTAMAVCNSISNPVTKEMLFEFIDRCAAAAQGQKRKYPLDPDTELMPPPPPKRLHRPT.

The segment at 1–212 is TPase; that stretch reads MAYNKIPPRW…DEDGKKDSEP (212 aa). A Tyrosine-protein phosphatase domain is found at 25-183; sequence LPLKTMLGPR…FRRYGDIEEA (159 aa). Cys-126 (phosphocysteine intermediate) is an active-site residue. The tract at residues 181–221 is disordered; the sequence is EEAPPPPVLPDWCFEDEDEEDEDEDGKKDSEPGSSASFSKR. Positions 193–204 are enriched in acidic residues; that stretch reads CFEDEDEEDEDE. The interval 229–597 is GTase; sequence GAIFLEGITV…PPPKRLHRPT (369 aa). Lys-294 acts as the N6-GMP-lysine intermediate in catalysis. GTP contacts are provided by residues Arg-299, Arg-315, 343–345, 458–460, and 528–533; these read DGE, KWK, and RQRIDK. An interaction with POLR2A region spans residues 330-386; it reads RKDLRMHLSNTLLDGEMIIDKVNGQAVPRYLIYDIIKFNAQPVGDCDFNIRLQCIER. Residues 573–597 are disordered; the sequence is KRKYPLDPDTELMPPPPPKRLHRPT.

It in the N-terminal section; belongs to the non-receptor class of the protein-tyrosine phosphatase family. This sequence in the C-terminal section; belongs to the eukaryotic GTase family. As to quaternary structure, interacts with SUPT5H and RNMT. Interacts with POLR2A (via C-terminus); this enhances guanylyltransferase activity. Binds (via GTase domain) to the elongating phosphorylated form of RNA polymerase II; can form direct interactions with the phosphorylated POLR2A C-terminal domain and indirect interactions via bound RNA.

It localises to the nucleus. The catalysed reaction is a 5'-end triphospho-ribonucleoside in mRNA + H2O = a 5'-end diphospho-ribonucleoside in mRNA + phosphate + H(+). It carries out the reaction a 5'-end diphospho-ribonucleoside in mRNA + GTP + H(+) = a 5'-end (5'-triphosphoguanosine)-ribonucleoside in mRNA + diphosphate. Its activity is regulated as follows. RNA triphosphatase activity is inhibited by vanadate, iodoacetate and magnesium. Functionally, bifunctional mRNA-capping enzyme exhibiting RNA 5'-triphosphate monophosphatase activity in the N-terminal part and mRNA guanylyltransferase activity in the C-terminal part. Catalyzes the first two steps of cap formation: by removing the gamma-phosphate from the 5'-triphosphate end of nascent mRNA to yield a diphosphate end, and by transferring the GMP moiety of GTP to the 5'-diphosphate terminus of RNA via a covalent enzyme-GMP reaction intermediate. This chain is mRNA-capping enzyme (Rngtt), found in Mus musculus (Mouse).